A 262-amino-acid chain; its full sequence is Probable aminoglycoside 3'-phosphotransferase (262 aa).

D187 acts as the Proton acceptor in catalysis.

This sequence belongs to the aminoglycoside phosphotransferase family.

The catalysed reaction is kanamycin A + ATP = kanamycin 3'-phosphate + ADP + H(+). The chain is Probable aminoglycoside 3'-phosphotransferase (ymdC) from Lactococcus lactis subsp. lactis (strain IL1403) (Streptococcus lactis).